Consider the following 233-residue polypeptide: Ubiquinone biosynthesis O-methyltransferase (233 aa).

Residues arginine 37, glycine 56, aspartate 77, and methionine 121 each contribute to the S-adenosyl-L-methionine site.

Belongs to the methyltransferase superfamily. UbiG/COQ3 family.

The enzyme catalyses a 3-demethylubiquinol + S-adenosyl-L-methionine = a ubiquinol + S-adenosyl-L-homocysteine + H(+). It catalyses the reaction a 3-(all-trans-polyprenyl)benzene-1,2-diol + S-adenosyl-L-methionine = a 2-methoxy-6-(all-trans-polyprenyl)phenol + S-adenosyl-L-homocysteine + H(+). The protein operates within cofactor biosynthesis; ubiquinone biosynthesis. Functionally, O-methyltransferase that catalyzes the 2 O-methylation steps in the ubiquinone biosynthetic pathway. In Azoarcus sp. (strain BH72), this protein is Ubiquinone biosynthesis O-methyltransferase.